The following is a 494-amino-acid chain: Protein nucleotidyltransferase YdiU (494 aa).

Residues glycine 101, glycine 103, arginine 104, lysine 123, aspartate 135, glycine 136, arginine 186, and arginine 193 each coordinate ATP. Aspartate 262 acts as the Proton acceptor in catalysis. 2 residues coordinate Mg(2+): asparagine 263 and aspartate 272. ATP is bound at residue aspartate 272.

It belongs to the SELO family. Mg(2+) serves as cofactor. Requires Mn(2+) as cofactor.

The enzyme catalyses L-seryl-[protein] + ATP = 3-O-(5'-adenylyl)-L-seryl-[protein] + diphosphate. The catalysed reaction is L-threonyl-[protein] + ATP = 3-O-(5'-adenylyl)-L-threonyl-[protein] + diphosphate. It catalyses the reaction L-tyrosyl-[protein] + ATP = O-(5'-adenylyl)-L-tyrosyl-[protein] + diphosphate. It carries out the reaction L-histidyl-[protein] + UTP = N(tele)-(5'-uridylyl)-L-histidyl-[protein] + diphosphate. The enzyme catalyses L-seryl-[protein] + UTP = O-(5'-uridylyl)-L-seryl-[protein] + diphosphate. The catalysed reaction is L-tyrosyl-[protein] + UTP = O-(5'-uridylyl)-L-tyrosyl-[protein] + diphosphate. Functionally, nucleotidyltransferase involved in the post-translational modification of proteins. It can catalyze the addition of adenosine monophosphate (AMP) or uridine monophosphate (UMP) to a protein, resulting in modifications known as AMPylation and UMPylation. This Chromohalobacter salexigens (strain ATCC BAA-138 / DSM 3043 / CIP 106854 / NCIMB 13768 / 1H11) protein is Protein nucleotidyltransferase YdiU.